The primary structure comprises 99 residues: NADH-quinone oxidoreductase subunit K (99 aa).

Helical transmembrane passes span 3-23 (PANY…GVLV), 28-48 (IVVF…LVTF), and 62-82 (FFVM…ILAI).

This sequence belongs to the complex I subunit 4L family. In terms of assembly, NDH-1 is composed of 14 different subunits. Subunits NuoA, H, J, K, L, M, N constitute the membrane sector of the complex.

The protein resides in the cell membrane. It carries out the reaction a quinone + NADH + 5 H(+)(in) = a quinol + NAD(+) + 4 H(+)(out). Functionally, NDH-1 shuttles electrons from NADH, via FMN and iron-sulfur (Fe-S) centers, to quinones in the respiratory chain. The immediate electron acceptor for the enzyme in this species is believed to be a menaquinone. Couples the redox reaction to proton translocation (for every two electrons transferred, four hydrogen ions are translocated across the cytoplasmic membrane), and thus conserves the redox energy in a proton gradient. This chain is NADH-quinone oxidoreductase subunit K, found in Parafrankia sp. (strain EAN1pec).